We begin with the raw amino-acid sequence, 244 residues long: Phosphatidylserine decarboxylase proenzyme (244 aa).

The active-site Schiff-base intermediate with substrate; via pyruvic acid is the serine 212. The residue at position 212 (serine 212) is a Pyruvic acid (Ser); by autocatalysis.

It belongs to the phosphatidylserine decarboxylase family. PSD-A subfamily. In terms of assembly, heterodimer of a large membrane-associated beta subunit and a small pyruvoyl-containing alpha subunit. It depends on pyruvate as a cofactor. In terms of processing, is synthesized initially as an inactive proenzyme. Formation of the active enzyme involves a self-maturation process in which the active site pyruvoyl group is generated from an internal serine residue via an autocatalytic post-translational modification. Two non-identical subunits are generated from the proenzyme in this reaction, and the pyruvate is formed at the N-terminus of the alpha chain, which is derived from the carboxyl end of the proenzyme. The post-translation cleavage follows an unusual pathway, termed non-hydrolytic serinolysis, in which the side chain hydroxyl group of the serine supplies its oxygen atom to form the C-terminus of the beta chain, while the remainder of the serine residue undergoes an oxidative deamination to produce ammonia and the pyruvoyl prosthetic group on the alpha chain.

It localises to the cell membrane. The catalysed reaction is a 1,2-diacyl-sn-glycero-3-phospho-L-serine + H(+) = a 1,2-diacyl-sn-glycero-3-phosphoethanolamine + CO2. It participates in phospholipid metabolism; phosphatidylethanolamine biosynthesis; phosphatidylethanolamine from CDP-diacylglycerol: step 2/2. Catalyzes the formation of phosphatidylethanolamine (PtdEtn) from phosphatidylserine (PtdSer). In Granulibacter bethesdensis (strain ATCC BAA-1260 / CGDNIH1), this protein is Phosphatidylserine decarboxylase proenzyme.